Reading from the N-terminus, the 301-residue chain is Thyroxine 5-deiodinase (301 aa).

At 1–41 (MSRQAAPRWVVGEGRGTLGGAATMLRSLLLHSLRLCSQTAS) the chain is on the cytoplasmic side. The helical; Signal-anchor for type II membrane protein transmembrane segment at 42 to 64 (CLVLFPRFLGTAFMLWLLDFLCI) threads the bilayer. Over 65–301 (RKHLLGRRRR…QLHGPQPRRV (237 aa)) the chain is Extracellular. Sec-167 is an active-site residue. A non-standard amino acid (selenocysteine) is located at residue Sec-167.

Belongs to the iodothyronine deiodinase family. Monomer. Homodimer. May undergo minor heretodimerization with DIO1 and DIO2. In terms of tissue distribution, highly expressed in mammary gland. Detected at lower levels in kidney, and at very low levels in the other tissues.

The protein localises to the cell membrane. It localises to the endosome membrane. The catalysed reaction is 3,3',5'-triiodo-L-thyronine + iodide + A + H(+) = L-thyroxine + AH2. It catalyses the reaction 3,3'-diiodo-L-thyronine + iodide + A + H(+) = 3,3',5-triiodo-L-thyronine + AH2. The enzyme catalyses 3-iodo-L-thyronine + iodide + A + H(+) = 3,5-diiodo-L-thyronine + AH2. It carries out the reaction L-thyronine + iodide + A + H(+) = 3-iodo-L-thyronine + AH2. The catalysed reaction is 3',5'-diiodo-L-thyronine + iodide + A + H(+) = 3,3',5'-triiodo-L-thyronine + AH2. It catalyses the reaction 3'-iodo-L-thyronine + iodide + A + H(+) = 3,3'-diiodo-L-thyronine + AH2. The enzyme catalyses 3,3',5'-triiodothyronamine + iodide + A + H(+) = 3,3',5,5'-tetraiodothyronamine + AH2. It carries out the reaction 3',5'-diiodothyronamine + iodide + A + H(+) = 3,3',5'-triiodothyronamine + AH2. The catalysed reaction is 3,3'-diiodothyronamine + iodide + A + H(+) = 3,3',5-triiodothyronamine + AH2. It catalyses the reaction 3-iodothyronamine + iodide + A + H(+) = 3,5-diiodothyronamine + AH2. The enzyme catalyses 3'-iodothyronamine + iodide + A + H(+) = 3,3'-diiodothyronamine + AH2. It carries out the reaction thyronamine + iodide + A + H(+) = 3-iodothyronamine + AH2. In terms of biological role, plays a crucial role in the metabolism of thyroid hormones (TH) and has specific roles in TH activation and inactivation by deiodination. Catalyzes the deiodination of L-thyroxine (T4) to 3,3',5'-triiodothyronine (rT3), 3,5,3'-triiodothyronine (T3) to 3,3'-diiodothyronine (3,3'-T2), 3,5-diiodothyronine (3,5-T2) to 3-monoiodothyronine (3-T1), rT3 to 3',5'-diiodothyronine (3',5'-T2) and 3,3'-T2 to 3'-monoiodothyronine (3'-T1) via inner-ring deiodination (IRD). Catalyzes the deiodination of 3-T1 to L-thyronine (T0) via outer-ring deiodination (ORD). Catalyzes the tyrosyl ring deiodinations of 3,3',5,5'-tetraiodothyronamine, 3,3',5'-triiodothyronamine, 3,5,3'-triiodothyronamine, 3,5-diiodothyronamine, 3,3'-diiodothyronamine and 3-iodothyronamine. The protein is Thyroxine 5-deiodinase (DIO3) of Bos taurus (Bovine).